The following is a 91-amino-acid chain: Elongation factor 1-beta (91 aa).

As to quaternary structure, homodimer.

Its function is as follows. Promotes the exchange of GDP for GTP in EF-1-alpha/GDP, thus allowing the regeneration of EF-1-alpha/GTP that could then be used to form the ternary complex EF-1-alpha/GTP/AAtRNA. This chain is Elongation factor 1-beta (ef1b), found in Saccharolobus solfataricus (strain ATCC 35092 / DSM 1617 / JCM 11322 / P2) (Sulfolobus solfataricus).